The chain runs to 77 residues: NAD(P)H-quinone oxidoreductase subunit L (77 aa).

2 consecutive transmembrane segments (helical) span residues 12–32 (LIAY…LLFY) and 47–67 (LGIY…SPFL).

The protein belongs to the complex I NdhL subunit family. As to quaternary structure, NDH-1 can be composed of about 15 different subunits; different subcomplexes with different compositions have been identified which probably have different functions.

It is found in the cellular thylakoid membrane. The enzyme catalyses a plastoquinone + NADH + (n+1) H(+)(in) = a plastoquinol + NAD(+) + n H(+)(out). It catalyses the reaction a plastoquinone + NADPH + (n+1) H(+)(in) = a plastoquinol + NADP(+) + n H(+)(out). In terms of biological role, NDH-1 shuttles electrons from an unknown electron donor, via FMN and iron-sulfur (Fe-S) centers, to quinones in the respiratory and/or the photosynthetic chain. The immediate electron acceptor for the enzyme in this species is believed to be plastoquinone. Couples the redox reaction to proton translocation, and thus conserves the redox energy in a proton gradient. Cyanobacterial NDH-1 also plays a role in inorganic carbon-concentration. This Prochlorococcus marinus (strain AS9601) protein is NAD(P)H-quinone oxidoreductase subunit L.